The chain runs to 239 residues: Mannose-P-dolichol utilization defect 1 protein homolog 1 (239 aa).

6 consecutive transmembrane segments (helical) span residues 25–45 (CLLP…SMTV), 62–82 (LSVV…AYCL), 91–111 (FGEL…IYYF), 123–143 (AILY…PFLF), 174–194 (LSFL…FTSI), and 202–222 (MLLG…QILL). The PQ-loop 1 domain occupies 27–93 (LPLISKLLGY…KDLPFSAFGE (67 aa)). The PQ-loop 2 domain maps to 150 to 205 (KHLIFLSARIPQIWKNFRNKSTGQLSFLTCLMNFGGALARVFTSIQEKAPLSMLLG).

Belongs to the MPDU1 (TC 2.A.43.3) family.

It is found in the membrane. This Arabidopsis thaliana (Mouse-ear cress) protein is Mannose-P-dolichol utilization defect 1 protein homolog 1.